The sequence spans 383 residues: TnpB-like protein ORF383B (383 aa).

Cys-328, Cys-331, Cys-345, and Cys-348 together coordinate Zn(2+).

It in the N-terminal section; belongs to the transposase 2 family. In the C-terminal section; belongs to the transposase 35 family.

This is TnpB-like protein ORF383B from Acidianus convivator (ATV).